We begin with the raw amino-acid sequence, 796 residues long: Lon protease (796 aa).

The 195-residue stretch at 19-213 folds into the Lon N-terminal domain; sequence LPVVVTRGIF…LLKELIINRP (195 aa). ATP is bound at residue 376–383; the sequence is GPPGVGKT. The Lon proteolytic domain occupies 612-793; it reads ESQVGVVTGL…EDVYEIIFKN (182 aa). Active-site residues include Ser-699 and Lys-742.

This sequence belongs to the peptidase S16 family. Homohexamer. Organized in a ring with a central cavity.

The protein resides in the cytoplasm. It carries out the reaction Hydrolysis of proteins in presence of ATP.. ATP-dependent serine protease that mediates the selective degradation of mutant and abnormal proteins as well as certain short-lived regulatory proteins. Required for cellular homeostasis and for survival from DNA damage and developmental changes induced by stress. Degrades polypeptides processively to yield small peptide fragments that are 5 to 10 amino acids long. Binds to DNA in a double-stranded, site-specific manner. The chain is Lon protease from Mycoplasma mycoides subsp. mycoides SC (strain CCUG 32753 / NCTC 10114 / PG1).